Here is a 130-residue protein sequence, read N- to C-terminus: Small ribosomal subunit protein uS9 (130 aa).

A disordered region spans residues 109-130 (RMKERKKYGLKAARRAPQFSKR). The segment covering 111–130 (KERKKYGLKAARRAPQFSKR) has biased composition (basic residues).

The protein belongs to the universal ribosomal protein uS9 family.

This chain is Small ribosomal subunit protein uS9, found in Lachnoclostridium phytofermentans (strain ATCC 700394 / DSM 18823 / ISDg) (Clostridium phytofermentans).